A 185-amino-acid chain; its full sequence is Serine/arginine-rich splicing factor RSZ21 (185 aa).

The RRM domain maps to 2-73; sequence ARLYVGNLDP…WRVELSRNSS (72 aa). A CCHC-type zinc finger spans residues 86-103; the sequence is MKCYECGETGHFARECRL. The disordered stretch occupies residues 104–185; the sequence is RIGPGGLGSG…DGGRYRRSRS (82 aa). Over residues 113-123 the composition is skewed to basic residues; that stretch reads GKRRSRSRSRS. Low complexity-rich tracts occupy residues 124–138 and 151–162; these read RSPQ…GRRS and VSPVRGRSYSRS.

It belongs to the splicing factor SR family. Extensively phosphorylated on serine residues in the RS domain. In terms of tissue distribution, expressed in roots, leaves and immature seeds.

The protein resides in the nucleus. Its function is as follows. Involved in pre-mRNA splicing. The sequence is that of Serine/arginine-rich splicing factor RSZ21 (RSZP21) from Oryza sativa subsp. japonica (Rice).